A 2879-amino-acid chain; its full sequence is Peramine synthetase ppzA (2879 aa).

Basic and acidic residues predominate over residues 1–12 (MTYDEGGHRNNE). The disordered stretch occupies residues 1–52 (MTYDEGGHRNNEETPQDVNMSSNNEGMSTSSPTGSYGEIIGQATVSVPQEDQ). The segment covering 16-34 (QDVNMSSNNEGMSTSSPTG) has biased composition (polar residues). The interval 351-747 (QEQCRLQPNT…VGRKDTQVKI (397 aa)) is adenylation 1. In terms of domain architecture, Carrier 1 spans 882–958 (QPLSDMERLL…DLSRQSKYIE (77 aa)). S919 is modified (O-(pantetheine 4'-phosphoryl)serine). The tract at residues 997 to 1410 (DAYPCTPLQE…ITILTTEDLE (414 aa)) is condensation. Positions 1433 to 1827 (DKVQHRPNAP…LSFVRRKDTT (395 aa)) are adenylation 2. The methylation (Met) domain stretch occupies residues 1958–2050 (LEIGCGSGMM…KYLVKLIQDI (93 aa)). One can recognise a Carrier 2 domain in the interval 2370-2448 (WPTTDTGKEL…RLLLDCCCDD (79 aa)). Position 2407 is an O-(pantetheine 4'-phosphoryl)serine (S2407). The interval 2500 to 2817 (TVLLTGANGF…LEDMLQDLDD (318 aa)) is thiesterase (TE) domain.

It belongs to the NRP synthetase family. The cofactor is pantetheine 4'-phosphate.

The catalysed reaction is (S)-1-pyrroline-5-carboxylate + L-arginine + S-adenosyl-L-methionine + 2 ATP = peramine + 2 AMP + S-adenosyl-L-homocysteine + 2 diphosphate + H2O + 2 H(+). It functions in the pathway secondary metabolite biosynthesis. Its function is as follows. Nonribosomal peptide synthetase; part of the gene cluster that mediates the biosynthesis of pyrrolopyrazines, secondary metabolites showing insecticidal activity. The single multifunctional NRPS ppzA is responsible for the biosynthesis of peramine. The condensation domain of ppzA is proposed to catalyze formation of a peptide bond between 1-pyrroline-5-carboxylate and arginine. The methylation domain of ppzA would catalyze the N-methylation of the alpha-amino group of arginine. The reductase domain is proposed to be responsible for reduction of the thioester and the cyclization to form an iminium ion resulting in release from the peptide synthetase. Deprotonation of this intermediate and oxidation of the pyrroline ring would give rise to peramine. This final oxidation to give the pyrrole functionality may be spontaneous. In Epichloe species that produce only peramine, the peramine synthetase gene is not localized in a gene cluster, in contrast to Metarhizium species that contain additional pyrrolopyrazine biosynthesis genes. The 2-oxoglutarate-Fe(II) type oxidoreductase ppzC hydroxylates peramine to yield the newly identified compound 8-hydroxyperamine whereas ppzD converts L-proline into trans-4-hydroxy-L-proline, a precursor of peramine biosynthesis. This is Peramine synthetase ppzA from Metarhizium rileyi (strain RCEF 4871) (Nomuraea rileyi).